The primary structure comprises 370 residues: 3-dehydroquinate synthase (370 aa).

NAD(+)-binding positions include 70–75 (DAEDGK), 104–108 (GAATD), 128–129 (TT), Lys-141, Lys-150, and 168–171 (TLET). Zn(2+) contacts are provided by Glu-183, His-246, and His-262.

The protein belongs to the sugar phosphate cyclases superfamily. Dehydroquinate synthase family. It depends on Co(2+) as a cofactor. Requires Zn(2+) as cofactor. NAD(+) serves as cofactor.

The protein resides in the cytoplasm. It catalyses the reaction 7-phospho-2-dehydro-3-deoxy-D-arabino-heptonate = 3-dehydroquinate + phosphate. It functions in the pathway metabolic intermediate biosynthesis; chorismate biosynthesis; chorismate from D-erythrose 4-phosphate and phosphoenolpyruvate: step 2/7. Catalyzes the conversion of 3-deoxy-D-arabino-heptulosonate 7-phosphate (DAHP) to dehydroquinate (DHQ). The chain is 3-dehydroquinate synthase from Rhodococcus opacus (strain B4).